Reading from the N-terminus, the 175-residue chain is Ribosome maturation factor RimM (175 aa).

The PRC barrel domain occupies 94-166 (SDSWYEHELI…FIRLVPPGGL (73 aa)).

Belongs to the RimM family. As to quaternary structure, binds ribosomal protein uS19.

It is found in the cytoplasm. Its function is as follows. An accessory protein needed during the final step in the assembly of 30S ribosomal subunit, possibly for assembly of the head region. Essential for efficient processing of 16S rRNA. May be needed both before and after RbfA during the maturation of 16S rRNA. It has affinity for free ribosomal 30S subunits but not for 70S ribosomes. This Renibacterium salmoninarum (strain ATCC 33209 / DSM 20767 / JCM 11484 / NBRC 15589 / NCIMB 2235) protein is Ribosome maturation factor RimM.